The primary structure comprises 346 residues: Phosphate acyltransferase (346 aa).

It belongs to the PlsX family. In terms of assembly, homodimer. Probably interacts with PlsY.

Its subcellular location is the cytoplasm. The enzyme catalyses a fatty acyl-[ACP] + phosphate = an acyl phosphate + holo-[ACP]. It functions in the pathway lipid metabolism; phospholipid metabolism. Catalyzes the reversible formation of acyl-phosphate (acyl-PO(4)) from acyl-[acyl-carrier-protein] (acyl-ACP). This enzyme utilizes acyl-ACP as fatty acyl donor, but not acyl-CoA. The chain is Phosphate acyltransferase from Synechococcus elongatus (strain ATCC 33912 / PCC 7942 / FACHB-805) (Anacystis nidulans R2).